A 426-amino-acid polypeptide reads, in one-letter code: D-ribulose kinase (426 aa).

Substrate-binding positions include D8, 12–15 (SGAR), S72, and D221. ATP is bound by residues S243, G281, and 376–380 (GGAKN).

This sequence belongs to the FGGY kinase family. A divalent metal cation serves as cofactor.

The catalysed reaction is D-ribulose + ATP = D-ribulose 5-phosphate + ADP + H(+). Its function is as follows. Exhibits ATP hydrolysis without substrate. Phosphorylates D-ribulose. In Synechococcus elongatus (strain ATCC 33912 / PCC 7942 / FACHB-805) (Anacystis nidulans R2), this protein is D-ribulose kinase.